The following is a 2118-amino-acid chain: Cilia- and flagella-associated protein 65 (2118 aa).

The helical transmembrane segment at Gly-6–Val-26 threads the bilayer. The 122-residue stretch at Phe-615 to Pro-736 folds into the MSP domain. 3 disordered regions span residues Ala-1007–Gly-1029, Ser-1764–Ala-1909, and Ala-1924–Arg-1958. Gly residues predominate over residues Gly-1825–Asp-1834. Over residues Arg-1840 to Ala-1849 the composition is skewed to low complexity. Residues Ala-1850–His-1859 show a composition bias toward basic residues. 2 stretches are compositionally biased toward low complexity: residues Ser-1892–Ala-1902 and Pro-1936–Pro-1949. Residues Ala-2016 to Glu-2045 are a coiled coil.

This sequence belongs to the CFAP65 family.

The protein resides in the cell projection. Its subcellular location is the cilium. It localises to the flagellum membrane. It is found in the cytoplasm. In terms of biological role, may play a role in flagellar formation and mobility. The polypeptide is Cilia- and flagella-associated protein 65 (Chlamydomonas reinhardtii (Chlamydomonas smithii)).